The following is a 159-amino-acid chain: H/ACA ribonucleoprotein complex subunit 2-like protein (159 aa).

Residues 1-28 (MAKTPKKDKTEEKEEHEESGGNKEDRER) form a disordered region.

This sequence belongs to the eukaryotic ribosomal protein eL8 family. In terms of assembly, component of the small nucleolar ribonucleoprotein particle containing H/ACA-type snoRNAs (H/ACA snoRNPs). Component of the telomerase holoenzyme complex.

The protein resides in the nucleus. The protein localises to the nucleolus. Required for ribosome biogenesis. Part of a complex which catalyzes pseudouridylation of rRNA. This involves the isomerization of uridine such that the ribose is subsequently attached to C5, instead of the normal N1. Pseudouridine ('psi') residues may serve to stabilize the conformation of rRNAs. This Branchiostoma belcheri (Amphioxus) protein is H/ACA ribonucleoprotein complex subunit 2-like protein.